Here is a 174-residue protein sequence, read N- to C-terminus: Myosin regulatory light chain sqh (174 aa).

Position 21 is a phosphothreonine (Thr-21). Ser-22 is modified (phosphoserine). 2 consecutive EF-hand domains span residues 31–66 and 100–135; these read AQIAEFKEAFNMIDQNRDGFVEKEDLHDMLASLGKN and DPEDVIKNAFGCFDEENMGVLPEDRLRELLTTMGDR. Positions 44, 46, 48, and 55 each coordinate Ca(2+).

As to quaternary structure, myosin is a hexamer of 2 heavy chains and 4 light chains. Phosphorylation plays a central role in myosin regulation.

Functionally, required for cytokinesis, could regulate contractile ring function. The polypeptide is Myosin regulatory light chain sqh (sqh) (Drosophila melanogaster (Fruit fly)).